Reading from the N-terminus, the 275-residue chain is Transmembrane protein 106B (275 aa).

Positions 1 to 24 (MGKSLSHLPLHSNKEDGYDGVTST) are disordered. A lipid anchor (N-myristoyl glycine) is attached at glycine 2. Residues 2 to 97 (GKSLSHLPLH…QRLRPRRTKL (96 aa)) lie on the Cytoplasmic side of the membrane. Phosphoserine is present on serine 34. The chain crosses the membrane as a helical span at residues 98–118 (YVMASVFVCLLLSGLAVFFLF). The Lumenal portion of the chain corresponds to 119–275 (PRSIDVKYIG…EYLNVLQPQQ (157 aa)). N-linked (GlcNAc...) asparagine glycans are attached at residues asparagine 146, asparagine 152, asparagine 165, and asparagine 184. A disulfide bridge connects residues cysteine 215 and cysteine 254. Residue asparagine 257 is glycosylated (N-linked (GlcNAc...) asparagine).

This sequence belongs to the TMEM106 family. In terms of assembly, can form homomers. Interacts (via N-terminus) with MAP6 (via C-terminus). Interacts (via C-terminus) with the vacuolar-type ATPase subunit ATP6AP1. Interacts (via N-terminus) with AP2M1 and CLTC. Interacts with TMEM106C. Expressed in cortical neurons (at protein level).

It is found in the late endosome membrane. The protein resides in the lysosome membrane. The protein localises to the cell membrane. In terms of biological role, involved in dendrite morphogenesis and maintenance by regulating lysosomal trafficking. May act as a molecular brake for retrograde transport of late endosomes/lysosomes, possibly via its interaction with MAP6. In neurons, may also play a role in the regulation of lysosomal size and responsiveness to stress. Required for proper lysosomal acidification. Functionally, in neurons, involved in the transport of late endosomes/lysosomes. May be involved in dendrite morphogenesis and maintenance by regulating lysosomal trafficking. May act as a molecular brake for retrograde transport of late endosomes/lysosomes, possibly via its interaction with MAP6. In motoneurons, may mediate the axonal transport of lysosomes and axonal sorting at the initial segment. It remains unclear whether TMEM106B affects the transport of moving lysosomes in the anterograde or retrograde direction in neurites and whether it is particularly important in the sorting of lysosomes in axons or in dendrites. In neurons, may also play a role in the regulation of lysosomal size and responsiveness to stress. Required for proper lysosomal acidification. This is Transmembrane protein 106B (Tmem106b) from Rattus norvegicus (Rat).